The sequence spans 557 residues: Polypyrimidine tract-binding protein 1 (557 aa).

Methionine 1 carries the post-translational modification N-acetylmethionine. Serine 16 carries the post-translational modification Phosphoserine. 3 RRM domains span residues arginine 59–asparagine 143, leucine 184–leucine 260, and serine 363–histidine 437. Lysine 65 participates in a covalent cross-link: Glycyl lysine isopeptide (Lys-Gly) (interchain with G-Cter in SUMO2). Tyrosine 127 is modified (phosphotyrosine). Position 138 is a phosphothreonine (threonine 138). Position 141 is a phosphoserine (serine 141). Lysine 218 is covalently cross-linked (Glycyl lysine isopeptide (Lys-Gly) (interchain with G-Cter in SUMO2)). Positions histidine 437–proline 460 are disordered. At serine 459 the chain carries Phosphoserine. The RRM 4 domain maps to alanine 480 to serine 555.

As to quaternary structure, monomer. Part of a ternary complex containing KHSRP, PTBP1, PTBP2 and HNRPH1. Interacts with RAVER1 and SFPQ.

The protein localises to the nucleus. In terms of biological role, plays a role in pre-mRNA splicing and in the regulation of alternative splicing events. Activates exon skipping of its own pre-mRNA during muscle cell differentiation. Binds to the polypyrimidine tract of introns. May promote RNA looping when bound to two separate polypyrimidine tracts in the same pre-mRNA. May promote the binding of U2 snRNP to pre-mRNA. Cooperates with RAVER1 to modulate switching between mutually exclusive exons during maturation of the TPM1 pre-mRNA. Represses the splicing of MAPT/Tau exon 10. Binds to polypyrimidine-rich controlling element (PCE) of CFTR and promotes exon skipping of CFTR exon 9, thereby antagonizing TIA1 and its role in exon inclusion of CFTR exon 9. Plays a role in the splicing of pyruvate kinase PKM by binding repressively to a polypyrimidine tract flanking PKM exon 9, inhibiting exon 9 inclusion and resulting in exon 10 inclusion and production of the PKM M2 isoform. In Bos taurus (Bovine), this protein is Polypyrimidine tract-binding protein 1 (PTBP1).